An 84-amino-acid chain; its full sequence is Cell division topological specificity factor (84 aa).

This sequence belongs to the MinE family.

Prevents the cell division inhibition by proteins MinC and MinD at internal division sites while permitting inhibition at polar sites. This ensures cell division at the proper site by restricting the formation of a division septum at the midpoint of the long axis of the cell. This Paraburkholderia phymatum (strain DSM 17167 / CIP 108236 / LMG 21445 / STM815) (Burkholderia phymatum) protein is Cell division topological specificity factor.